Reading from the N-terminus, the 650-residue chain is Flap endonuclease 1 (650 aa).

Residues 1–106 are N-domain; that stretch reads MGIKGLTKFI…SELEKRGEKR (106 aa). Residue Asp-34 participates in Mg(2+) binding. Residues Arg-47 and Arg-72 each contribute to the DNA site. Positions 88, 160, 162, 181, and 183 each coordinate Mg(2+). The segment at 124–266 is I-domain; that stretch reads EIKKQSGRTV…KTAYNLIKEY (143 aa). DNA is bound at residue Glu-160. 2 residues coordinate DNA: Gly-244 and Asp-246. A Mg(2+)-binding site is contributed by Asp-246. Residues 349–357 are interaction with PCNA; that stretch reads TQRRLDNFF. Residues 371 to 592 form a disordered region; the sequence is ETKKEQTLPA…NSYNNIKNNN (222 aa). 3 stretches are compositionally biased toward basic and acidic residues: residues 413-469, 478-502, and 511-524; these read MKEE…KKSL, DSDKESESGNIIKNEKQNMDDEKIN, and DHSRIRHTENKDNI. The segment covering 525–562 has biased composition (low complexity); it reads SDINNNNNNNNNNSSSNNNNISNNHFNSVSSNSTFNSS. Positions 565–581 are enriched in basic and acidic residues; it reads LKSEDTLKSNSPLKEDS. Low complexity predominate over residues 582 to 592; that stretch reads PNSYNNIKNNN.

This sequence belongs to the XPG/RAD2 endonuclease family. FEN1 subfamily. In terms of assembly, interacts with PCNA1 and PCNA2. Three molecules of FEN1 bind to one PCNA trimer with each molecule binding to one PCNA monomer. PCNA stimulates the nuclease activity without altering cleavage specificity. Mg(2+) serves as cofactor. Post-translationally, phosphorylated. Phosphorylation upon DNA damage induces relocalization to the nuclear plasma.

The protein resides in the nucleus. It localises to the nucleolus. Its subcellular location is the nucleoplasm. It is found in the mitochondrion. Inhibited by monovalent metal ions. Functionally, structure-specific nuclease with 5'-flap endonuclease and 5'-3' exonuclease activities involved in DNA replication and repair. During DNA replication, cleaves the 5'-overhanging flap structure that is generated by displacement synthesis when DNA polymerase encounters the 5'-end of a downstream Okazaki fragment. It enters the flap from the 5'-end and then tracks to cleave the flap base, leaving a nick for ligation. Also involved in the long patch base excision repair (LP-BER) pathway, by cleaving within the apurinic/apyrimidinic (AP) site-terminated flap. Acts as a genome stabilization factor that prevents flaps from equilibrating into structures that lead to duplications and deletions. Also possesses 5'-3' exonuclease activity on nicked or gapped double-stranded DNA, and exhibits RNase H activity. Also involved in replication and repair of rDNA and in repairing mitochondrial DNA. This is Flap endonuclease 1 from Plasmodium falciparum.